The chain runs to 121 residues: Large ribosomal subunit protein bL20 (121 aa).

This sequence belongs to the bacterial ribosomal protein bL20 family.

Its function is as follows. Binds directly to 23S ribosomal RNA and is necessary for the in vitro assembly process of the 50S ribosomal subunit. It is not involved in the protein synthesizing functions of that subunit. The chain is Large ribosomal subunit protein bL20 from Wolbachia sp. subsp. Drosophila simulans (strain wRi).